Reading from the N-terminus, the 444-residue chain is MSTILESLPTGQKVGIAFSGGLDTSAALHWMKLKGAVPYAYTANLGQPDEDDYDAIPKRAIEYGAAGARLIDCRAQLVAEGIAALQSGAFHITTAGVTYFNTTPIGRAVTGTMLVAAMKEDGVNIWGDGSTYKGNDIERFYRYGLLVNPDLKIYKPWLDQTFIDELGGRAEMSEFMNQAGFAYKMSAEKAYSTDSNLLGATHEAKDLESLESGIKIVNPIMGVAFWRDDVKIAAEEVTVRFEAGQPVALNGVEFSDPVELLLEANRIGGRHGLGMSDQIENRIIEAKSRGIYEAPGLALLYIAYERLVTGIHNEDTIEQYRENGRRLGRLLYQGRWFDPQAIMLRETAQRWVARAITGEVKIELRRGNDYSILSTKSPNLTYQPERLSMEKVASTFSPRDRIGQLTMRNLDITDTRDKLRVYSQVGLLTPGETSALPQIKGDDK.

ATP is bound by residues 17 to 25 (AFSGGLDTS) and alanine 43. Residue tyrosine 99 coordinates L-citrulline. Glycine 129 and threonine 131 together coordinate ATP. L-aspartate is bound by residues threonine 131, asparagine 135, and aspartate 136. Asparagine 135 lines the L-citrulline pocket. Aspartate 136 serves as a coordination point for ATP. Arginine 139 and serine 192 together coordinate L-citrulline. Aspartate 194 is a binding site for ATP. L-citrulline contacts are provided by threonine 201, glutamate 203, and glutamate 280.

The protein belongs to the argininosuccinate synthase family. Type 2 subfamily. As to quaternary structure, homotetramer.

Its subcellular location is the cytoplasm. The catalysed reaction is L-citrulline + L-aspartate + ATP = 2-(N(omega)-L-arginino)succinate + AMP + diphosphate + H(+). The protein operates within amino-acid biosynthesis; L-arginine biosynthesis; L-arginine from L-ornithine and carbamoyl phosphate: step 2/3. The protein is Argininosuccinate synthase of Burkholderia lata (strain ATCC 17760 / DSM 23089 / LMG 22485 / NCIMB 9086 / R18194 / 383).